A 394-amino-acid chain; its full sequence is Argininosuccinate synthase (394 aa).

8–16 (AYSGGLDTS) contributes to the ATP binding site. L-citrulline-binding residues include tyrosine 86 and serine 91. Residue glycine 116 coordinates ATP. Threonine 118, asparagine 122, and aspartate 123 together coordinate L-aspartate. An L-citrulline-binding site is contributed by asparagine 122. Residues arginine 126, serine 172, serine 181, glutamate 257, and tyrosine 269 each coordinate L-citrulline.

It belongs to the argininosuccinate synthase family. Type 1 subfamily. Homotetramer.

It localises to the cytoplasm. It carries out the reaction L-citrulline + L-aspartate + ATP = 2-(N(omega)-L-arginino)succinate + AMP + diphosphate + H(+). It functions in the pathway amino-acid biosynthesis; L-arginine biosynthesis; L-arginine from L-ornithine and carbamoyl phosphate: step 2/3. This chain is Argininosuccinate synthase, found in Methanosarcina mazei (strain ATCC BAA-159 / DSM 3647 / Goe1 / Go1 / JCM 11833 / OCM 88) (Methanosarcina frisia).